Here is a 577-residue protein sequence, read N- to C-terminus: Optineurin (577 aa).

2 disordered regions span residues 1–32 (MSHQ…HPNL) and 101–143 (SHEN…KDQL). Residues 38–170 (EELLQQMKEL…VSELQLKLNS (133 aa)) are a coiled coil. Residues 58–209 (MKLNNQAMKG…GPTRTVSTGT (152 aa)) are interaction with Rab8. The LIR signature appears at 176–181 (DSFVEI). The residue at position 177 (Ser-177) is a Phosphoserine; by TBK1. Residues 186 to 197 (GEAEGSVKEIKH) are compositionally biased toward basic and acidic residues. Disordered stretches follow at residues 186–209 (GEAE…STGT) and 261–297 (VSDF…TVGS). At Ser-198 the chain carries Phosphoserine. Positions 239-508 (CLREGNQKVE…LLKENDAFED (270 aa)) form a coiled coil. 2 stretches are compositionally biased toward basic and acidic residues: residues 261-274 (VSDF…RSEI) and 281-292 (STEKENDEEKGP). Ser-342 carries the phosphoserine modification. The tract at residues 411-577 (TRKESEKVDR…LQIHVMDCII (167 aa)) is interaction with HD. Residues 412 to 520 (RKESEKVDRA…RQSLMEMQSR (109 aa)) form an interaction with MYO6 region. A UBAN motif is present at residues 474-479 (DFHAER). Ser-526 bears the Phosphoserine mark. The CCHC NOA-type zinc finger occupies 547–577 (QRNIPIHSCPKCGEVLPDIDTLQIHVMDCII). Residues Cys-555, Cys-558, His-571, and Cys-575 each coordinate Zn(2+).

Self-associates. Interacts with HD. Interacts with GTF3A. Interacts with MYO6. Interacts (via UBAN) with ubiquitinated TFRC. Interacts with GTP-bound Rab8 (RAB8A and/or RAB8B). Interacts with TBC1D17. Interacts with TBK1. Interacts with TRAF3. Binds to linear ubiquitin chains. Interacts with LC3 family members MAP1LC3A, MAP1LC3B, GABARAP, GABARAPL1 and GABARAPL2; OPTN phosphorylation increases the association (at least with MAP1LC3B). Interacts with RAB12; the interaction may be indirect. Interacts with TBK1; this interaction leads to the Golgi localization of TBK1 and its subsequent activation. Interacts with palmitoyltransferase ZDHHC17/HIP14; the interaction does not lead to palmitoylation of OPTN. Interacts with CYLD. Interacts with TOM1; the interaction is indirect and is mediated by MYO6, which acts as a bridge between TOM1 and OPTN. Interacts with USP12; the interaction is independent of USP12 deubiquitinase activity and may be involved in regulation of autophagic flux. As to quaternary structure, (Microbial infection) Interacts with E3 14.7 kDa protein of group C human adenovirus. Interacts with Bluetongue virus protein NS3. Post-translationally, phosphorylated by TBK1, leading to restrict bacterial proliferation in case of infection. Phosphorylation is induced by phorbol esters and decreases its half-time. Present in aqueous humor of the eye (at protein level). Expressed in the trabecular meshwork (at protein level). Expressed in nonpigmented ciliary epithelium (at protein level). Expressed at high levels in skeletal muscle, also detected in heart, brain, pancreas, kidney, placenta and liver. Expressed in dermal fibroblasts (at protein level).

Its subcellular location is the cytoplasm. The protein resides in the perinuclear region. It is found in the golgi apparatus. The protein localises to the trans-Golgi network. It localises to the cytoplasmic vesicle. Its subcellular location is the autophagosome. The protein resides in the recycling endosome. Its function is as follows. Plays an important role in the maintenance of the Golgi complex, in membrane trafficking, in exocytosis, through its interaction with myosin VI and Rab8. Links myosin VI to the Golgi complex and plays an important role in Golgi ribbon formation. Plays a role in the activation of innate immune response during viral infection. Mechanistically, recruits TBK1 at the Golgi apparatus, promoting its trans-phosphorylation after RLR or TLR3 stimulation. In turn, activated TBK1 phosphorylates its downstream partner IRF3 to produce IFN-beta/IFNB1. Plays a neuroprotective role in the eye and optic nerve. May act by regulating membrane trafficking and cellular morphogenesis via a complex that contains Rab8 and huntingtin (HD). Mediates the interaction of Rab8 with the probable GTPase-activating protein TBC1D17 during Rab8-mediated endocytic trafficking, such as that of transferrin receptor (TFRC/TfR); regulates Rab8 recruitment to tubules emanating from the endocytic recycling compartment. Autophagy receptor that interacts directly with both the cargo to become degraded and an autophagy modifier of the MAP1 LC3 family; targets ubiquitin-coated bacteria (xenophagy), such as cytoplasmic Salmonella enterica, and appears to function in the same pathway as SQSTM1 and CALCOCO2/NDP52. Functionally, (Microbial infection) May constitute a cellular target for various viruses, such as adenovirus E3 14.7 or Bluetongue virus, to inhibit innate immune response. During RNA virus infection, such as that of Sendai virus, negatively regulates the induction of IFNB1. This Homo sapiens (Human) protein is Optineurin (OPTN).